Reading from the N-terminus, the 500-residue chain is Maturase K (500 aa).

The protein belongs to the intron maturase 2 family. MatK subfamily.

It localises to the plastid. Its subcellular location is the chloroplast. Functionally, usually encoded in the trnK tRNA gene intron. Probably assists in splicing its own and other chloroplast group II introns. This Brasenia schreberi (Water shield) protein is Maturase K.